Here is a 422-residue protein sequence, read N- to C-terminus: MNANDNVVIVGTGLAGVEVAFGLRASGWEGNIRLVGDATVIPHHLPPLSKAYLAGKATAESLYLRTPDAYAAQNIQLLGGTQVTAINRDRQQVILSDGRALDYDRLVLATGGRPRPLPVASGAVGKANNFRYLRTLEDAECIRRQLIADNRLVVIGGGYIGLEVAATAIKANMHVTLLDTAARVLERVTAPPVSAFYEHLHREAGVDIRTGTQVCGFEMSTDQQKVTAVLCEDGTRLPADLVIAGIGLIPNCELASAAGLQVDNGIVINEHMQTSDPLIMAVGDCARFHSQLYDRWVRIESVPNALEQARKIAAILCGKVPRDEAAPWFWSDQYEIGLKMVGLSEGYDRIIVRGSLAQPDFSVFYLQGDRVLAVDTVNRPVEFNQSKQIITDRLPVEPNLLGDESVPLKEIIAAAKAELSSA.

The FAD site is built by Ala-15, Asp-37, Lys-50, Val-83, and Arg-134. Residue 156-165 participates in NAD(+) binding; the sequence is GGGYIGLEVA. The FAD site is built by Asp-284 and Val-302.

It belongs to the FAD-dependent oxidoreductase family. In terms of assembly, homodimer or monomer. It depends on FAD as a cofactor.

The enzyme catalyses 2 reduced [2Fe-2S]-[putidaredoxin] + NAD(+) + H(+) = 2 oxidized [2Fe-2S]-[putidaredoxin] + NADH. It participates in terpene metabolism; (R)-camphor degradation. Its function is as follows. The oxidation of camphor by cytochrome P450-CAM CamC requires the participation of the flavoprotein, putidaredoxin reductase CamA, and the iron-sulfur protein, putidaredoxin CamB, to mediate the transfer of electrons from NADH to P450 for oxygen activation. The polypeptide is Putidaredoxin reductase CamA (Pseudomonas putida (Arthrobacter siderocapsulatus)).